A 638-amino-acid polypeptide reads, in one-letter code: Growth hormone receptor (638 aa).

An N-terminal signal peptide occupies residues M1–A18. Residues F19–Y264 lie on the Extracellular side of the membrane. Residue N46 is glycosylated (N-linked (GlcNAc...) asparagine). Disulfide bonds link C56–C66 and C101–C112. The N-linked (GlcNAc...) asparagine glycan is linked to N115. C126 and C140 are oxidised to a cystine. In terms of domain architecture, Fibronectin type-III spans P151–M254. N-linked (GlcNAc...) asparagine glycosylation is found at N156, N161, and N200. A WSXWS motif motif is present at residues Y240–S244. The segment at E260–D262 is required for ADAM17-mediated proteolysis. A helical transmembrane segment spans residues F265–S288. The Cytoplasmic segment spans residues K289–P638. The segment at K294–V379 is required for JAK2 binding. Positions I297–K305 match the Box 1 motif motif. The UbE motif motif lies at D340 to D349. Phosphoserine is present on S341. The segment at P353 to E391 is disordered. Over residues T362–S384 the composition is skewed to basic and acidic residues. A phosphotyrosine; by JAK2 mark is found at Y487 and Y595.

It belongs to the type I cytokine receptor family. Type 1 subfamily. On growth hormone (GH) binding, forms homodimers and binds JAK2 via a box 1-containing domain. The soluble form (GHBP) is produced by phorbol ester-promoted proteolytic cleavage at the cell surface (shedding) by ADAM17/TACE. Shedding is inhibited by growth hormone (GH) binding to the receptor probably due to a conformational change in GHR rendering the receptor inaccessible to ADAM17. In terms of processing, on GH binding, phosphorylated on tyrosine residues in the cytoplasmic domain by JAK2. Post-translationally, ubiquitinated by the ECS(SOCS2) complex following ligand-binding and phosphorylation by JAK2, leading to its degradation by the proteasome. Regulation by the ECS(SOCS2) complex acts as a negative feedback loop of growth hormone receptor signaling. Ubiquitination is not sufficient for GHR internalization. As to expression, expressed in various tissues with high expression in liver and skeletal muscle. In terms of tissue distribution, isoform 2 is expressed in lung, stomach and muscle. Predominantly expressed in kidney, bladder, adrenal gland and brain stem. Highly expressed in placental villi.

Its subcellular location is the cell membrane. It localises to the secreted. Its function is as follows. Receptor for pituitary gland growth hormone (GH1) involved in regulating postnatal body growth. On ligand binding, couples to the JAK2/STAT5 pathway. In terms of biological role, the soluble form (GHBP) acts as a reservoir of growth hormone in plasma and may be a modulator/inhibitor of GH signaling. Functionally, up-regulates the production of the soluble Growth hormone-binding protein form (GHBP) and acts as a negative inhibitor of growth hormone signaling. The polypeptide is Growth hormone receptor (GHR) (Homo sapiens (Human)).